Consider the following 415-residue polypeptide: Tyrosine--tRNA ligase (415 aa).

Tyr34 lines the L-tyrosine pocket. A 'HIGH' region motif is present at residues 39-48 (PTADSLHLGH). Tyr164 and Gln168 together coordinate L-tyrosine. Positions 226–230 (KFGKS) match the 'KMSKS' region motif. Residue Lys229 participates in ATP binding. Positions 348 to 415 (KNIVDFLVDG…KKKYFLGKIK (68 aa)) constitute an S4 RNA-binding domain.

It belongs to the class-I aminoacyl-tRNA synthetase family. TyrS type 1 subfamily. In terms of assembly, homodimer.

Its subcellular location is the cytoplasm. The enzyme catalyses tRNA(Tyr) + L-tyrosine + ATP = L-tyrosyl-tRNA(Tyr) + AMP + diphosphate + H(+). In terms of biological role, catalyzes the attachment of tyrosine to tRNA(Tyr) in a two-step reaction: tyrosine is first activated by ATP to form Tyr-AMP and then transferred to the acceptor end of tRNA(Tyr). The polypeptide is Tyrosine--tRNA ligase (Leuconostoc citreum (strain KM20)).